We begin with the raw amino-acid sequence, 64 residues long: Beta sliding clamp (64 aa).

The protein belongs to the beta sliding clamp family. As to quaternary structure, forms a ring-shaped head-to-tail homodimer around DNA which binds and tethers DNA polymerases and other proteins to the DNA. The DNA replisome complex has a single clamp-loading complex (3 tau and 1 each of delta, delta', psi and chi subunits) which binds 3 Pol III cores (1 core on the leading strand and 2 on the lagging strand) each with a beta sliding clamp dimer. Additional proteins in the replisome are other copies of gamma, psi and chi, Ssb, DNA helicase and RNA primase.

The protein localises to the cytoplasm. In terms of biological role, confers DNA tethering and processivity to DNA polymerases and other proteins. Acts as a clamp, forming a ring around DNA (a reaction catalyzed by the clamp-loading complex) which diffuses in an ATP-independent manner freely and bidirectionally along dsDNA. Initially characterized for its ability to contact the catalytic subunit of DNA polymerase III (Pol III), a complex, multichain enzyme responsible for most of the replicative synthesis in bacteria; Pol III exhibits 3'-5' exonuclease proofreading activity. The beta chain is required for initiation of replication as well as for processivity of DNA replication. This is Beta sliding clamp (dnaN) from Actinobacillus pleuropneumoniae (Haemophilus pleuropneumoniae).